The following is a 706-amino-acid chain: SPX domain-containing membrane protein OsI_32082 (706 aa).

The 144-residue stretch at 2–145 folds into the SPX domain; sequence VNFSNKLTKD…GYKFTDYYVR (144 aa). A run of 6 helical transmembrane segments spans residues 251–271, 281–301, 318–338, 340–359, 378–398, and 414–434; these read MSLV…YIVV, LGAA…AQVF, LLFS…AFDL, SLTI…ARAV, AAFV…AGLL, and LPGW…WISF. The interval 475–498 is disordered; the sequence is SEQDEEDDNGDEEHNETLSSSTTT. The span at 476-488 shows a compositional bias: acidic residues; sequence EQDEEDDNGDEEH. Helical transmembrane passes span 520-540, 554-574, 583-603, 611-631, and 678-698; these read LLIY…SSVV, VFLA…GTYI, ILVA…KLTV, VCSA…NLSL, and LLNA…AATL.

This sequence belongs to the major facilitator superfamily.

The protein resides in the membrane. In Oryza sativa subsp. indica (Rice), this protein is SPX domain-containing membrane protein OsI_32082.